The following is a 493-amino-acid chain: Glutamyl-tRNA(Gln) amidotransferase subunit A (493 aa).

Active-site charge relay system residues include K78 and S159. Catalysis depends on S183, which acts as the Acyl-ester intermediate.

This sequence belongs to the amidase family. GatA subfamily. As to quaternary structure, heterotrimer of A, B and C subunits.

It carries out the reaction L-glutamyl-tRNA(Gln) + L-glutamine + ATP + H2O = L-glutaminyl-tRNA(Gln) + L-glutamate + ADP + phosphate + H(+). Allows the formation of correctly charged Gln-tRNA(Gln) through the transamidation of misacylated Glu-tRNA(Gln) in organisms which lack glutaminyl-tRNA synthetase. The reaction takes place in the presence of glutamine and ATP through an activated gamma-phospho-Glu-tRNA(Gln). The polypeptide is Glutamyl-tRNA(Gln) amidotransferase subunit A (Sphingopyxis alaskensis (strain DSM 13593 / LMG 18877 / RB2256) (Sphingomonas alaskensis)).